Reading from the N-terminus, the 426-residue chain is uncharacterized protein (426 aa).

A signal peptide spans 1-23 (MKKFILFLIILLFSIYFLNVSSA).

This is an uncharacterized protein from Methanocaldococcus jannaschii (strain ATCC 43067 / DSM 2661 / JAL-1 / JCM 10045 / NBRC 100440) (Methanococcus jannaschii).